We begin with the raw amino-acid sequence, 244 residues long: INO80 complex subunit E (244 aa).

Positions 10-54 (DYKKKYRNLKRKLKFLIYEHECFQEELRKAQRKLLKVSRDKSFLL) form a coiled coil. Residues 63-236 (VDEDSSDSDA…SGDDALDGDD (174 aa)) form a disordered region. Positions 99–115 (PPLGGAPSPSSLSLPPS) are enriched in low complexity. Basic residues predominate over residues 157-171 (RPKREKRPRLPRKLK). Glycyl lysine isopeptide (Lys-Gly) (interchain with G-Cter in SUMO2) cross-links involve residues Lys-159 and Lys-171. The segment covering 202-212 (PLPPPKMPPPT) has biased composition (pro residues).

As to quaternary structure, component of the chromatin remodeling INO80 complex; specifically part of a complex module associated with the N-terminus of INO80.

It is found in the nucleus. Functionally, putative regulatory component of the chromatin remodeling INO80 complex which is involved in transcriptional regulation, DNA replication and probably DNA repair. This chain is INO80 complex subunit E (INO80E), found in Homo sapiens (Human).